The following is a 58-amino-acid chain: Photosystem II reaction center protein K (58 aa).

Residues 1–21 (MLNMISTFFDSSSNFSEAFLA) constitute a propeptide that is removed on maturation. The chain crosses the membrane as a helical span at residues 29–49 (IFDPIVDVMPIIPVFFLLLAF).

This sequence belongs to the PsbK family. In terms of assembly, PSII is composed of 1 copy each of membrane proteins PsbA, PsbB, PsbC, PsbD, PsbE, PsbF, PsbH, PsbI, PsbJ, PsbK, PsbL, PsbM, PsbT, PsbX, PsbY, PsbZ, Psb30/Ycf12, at least 3 peripheral proteins of the oxygen-evolving complex and a large number of cofactors. It forms dimeric complexes.

The protein localises to the plastid. It is found in the chloroplast thylakoid membrane. Its function is as follows. One of the components of the core complex of photosystem II (PSII). PSII is a light-driven water:plastoquinone oxidoreductase that uses light energy to abstract electrons from H(2)O, generating O(2) and a proton gradient subsequently used for ATP formation. It consists of a core antenna complex that captures photons, and an electron transfer chain that converts photonic excitation into a charge separation. The sequence is that of Photosystem II reaction center protein K from Chaetosphaeridium globosum (Charophycean green alga).